The chain runs to 380 residues: Cytochrome b (380 aa).

Transmembrane regions (helical) follow at residues 33-53 (FGSL…FLAM), 77-98 (WLIR…FLHV), 113-133 (WNMG…GYVL), and 178-198 (FFAF…VHLL). His83 and His97 together coordinate heme b. Heme b contacts are provided by His182 and His196. Residue His201 participates in a ubiquinone binding. The next 4 helical transmembrane spans lie at 226 to 246 (IKDF…TLFF), 288 to 308 (LGGV…PLLH), 320 to 340 (ITQT…WIGG), and 347 to 367 (FIII…ILMP).

This sequence belongs to the cytochrome b family. In terms of assembly, the cytochrome bc1 complex contains 11 subunits: 3 respiratory subunits (MT-CYB, CYC1 and UQCRFS1), 2 core proteins (UQCRC1 and UQCRC2) and 6 low-molecular weight proteins (UQCRH/QCR6, UQCRB/QCR7, UQCRQ/QCR8, UQCR10/QCR9, UQCR11/QCR10 and a cleavage product of UQCRFS1). This cytochrome bc1 complex then forms a dimer. Heme b is required as a cofactor.

It is found in the mitochondrion inner membrane. Its function is as follows. Component of the ubiquinol-cytochrome c reductase complex (complex III or cytochrome b-c1 complex) that is part of the mitochondrial respiratory chain. The b-c1 complex mediates electron transfer from ubiquinol to cytochrome c. Contributes to the generation of a proton gradient across the mitochondrial membrane that is then used for ATP synthesis. The chain is Cytochrome b (MT-CYB) from Microtus guentheri (Gunther's vole).